Reading from the N-terminus, the 315-residue chain is Heterodimeric geranylgeranyl pyrophosphate synthase small subunit 1, chloroplastic (315 aa).

2 residues coordinate Mg(2+): Asp124 and Gly130. Residues Lys228, Gln265, and Lys280 each contribute to the dimethylallyl diphosphate site.

Belongs to the FPP/GGPP synthase family. In terms of assembly, part of a heterodimeric geranyl(geranyl)diphosphate synthase. The cofactor is Mg(2+). Mainly expressed in trichomes, and, to a lower extent, in roots, leaves, flowers and stems.

Its subcellular location is the plastid. The protein localises to the chloroplast thylakoid membrane. It localises to the chloroplast. Its function is as follows. Heterodimeric geranyl(geranyl)-diphosphate (GPP) synthase small subunit. The small subunit alone is inactive in vitro while the large subunit GGPPS1 catalyzes mainly the production of geranygeranyl-diphosphate in vitro. Upon association of the two subunits, the product profile changes and the production of gerany-diphosphate is strongly increased. The protein is Heterodimeric geranylgeranyl pyrophosphate synthase small subunit 1, chloroplastic of Cannabis sativa (Hemp).